A 372-amino-acid chain; its full sequence is Queuine tRNA-ribosyltransferase (372 aa).

The Proton acceptor role is filled by Asp-92. Residues 92 to 96 (DSGGY), Asp-146, Gln-188, and Gly-215 contribute to the substrate site. The segment at 246–252 (GIGSLKE) is RNA binding. Asp-265 acts as the Nucleophile in catalysis. The tract at residues 270–274 (TRLGR) is RNA binding; important for wobble base 34 recognition. Positions 303, 305, 308, and 334 each coordinate Zn(2+).

This sequence belongs to the queuine tRNA-ribosyltransferase family. As to quaternary structure, homodimer. Within each dimer, one monomer is responsible for RNA recognition and catalysis, while the other monomer binds to the replacement base PreQ1. Requires Zn(2+) as cofactor.

It carries out the reaction 7-aminomethyl-7-carbaguanine + guanosine(34) in tRNA = 7-aminomethyl-7-carbaguanosine(34) in tRNA + guanine. It functions in the pathway tRNA modification; tRNA-queuosine biosynthesis. Its function is as follows. Catalyzes the base-exchange of a guanine (G) residue with the queuine precursor 7-aminomethyl-7-deazaguanine (PreQ1) at position 34 (anticodon wobble position) in tRNAs with GU(N) anticodons (tRNA-Asp, -Asn, -His and -Tyr). Catalysis occurs through a double-displacement mechanism. The nucleophile active site attacks the C1' of nucleotide 34 to detach the guanine base from the RNA, forming a covalent enzyme-RNA intermediate. The proton acceptor active site deprotonates the incoming PreQ1, allowing a nucleophilic attack on the C1' of the ribose to form the product. After dissociation, two additional enzymatic reactions on the tRNA convert PreQ1 to queuine (Q), resulting in the hypermodified nucleoside queuosine (7-(((4,5-cis-dihydroxy-2-cyclopenten-1-yl)amino)methyl)-7-deazaguanosine). The sequence is that of Queuine tRNA-ribosyltransferase from Prochlorococcus marinus (strain MIT 9301).